We begin with the raw amino-acid sequence, 253 residues long: Putative tyrosine-protein phosphatase OCA1 (253 aa).

Residues 1-21 are compositionally biased toward basic and acidic residues; sequence MHRTSIVEELERHQQDQKADQ. The disordered stretch occupies residues 1 to 84; sequence MHRTSIVEEL…PRMKTIVKPP (84 aa). Polar residues predominate over residues 27-65; that stretch reads SDASNSALQESSDPRLSTTDNTNTPEINVNDQQQEQQVA. In terms of domain architecture, Tyrosine-protein phosphatase spans 93-249; it reads NFGPVERNLY…IIVYPESAPE (157 aa). The Phosphocysteine intermediate role is filled by Cys186.

Belongs to the protein-tyrosine phosphatase family.

The protein resides in the cytoplasm. The enzyme catalyses O-phospho-L-tyrosyl-[protein] + H2O = L-tyrosyl-[protein] + phosphate. Functionally, putative tyrosine-protein phosphatase required for protection against superoxide stress. This chain is Putative tyrosine-protein phosphatase OCA1 (OCA1), found in Yarrowia lipolytica (strain CLIB 122 / E 150) (Yeast).